We begin with the raw amino-acid sequence, 552 residues long: Tyrosine-protein kinase Src64B (552 aa).

One can recognise an SH3 domain in the interval 95–156; sequence VLKRVVVALY…PLNFVAEERS (62 aa). In terms of domain architecture, SH2 spans 162–259; that stretch reads WFFENVLRKE…GLCHILSRPC (98 aa). The region spanning 284 to 537 is the Protein kinase domain; it reads IQLLRKLGRG…TFEFLNHYFE (254 aa). ATP is bound by residues 290–298 and lysine 312; that span reads LGRGNFGEV. Catalysis depends on aspartate 404, which acts as the Proton acceptor. Phosphotyrosine; by autocatalysis is present on tyrosine 434.

Belongs to the protein kinase superfamily. Tyr protein kinase family. SRC subfamily. Interacts with hzg. Post-translationally, phosphorylated. As to expression, after the first 8 hours of development, accumulates almost exclusively in neural tissues such as the brain, ventral nerve chord, and eye-antennal disks, and in differentiating smooth muscle.

It catalyses the reaction L-tyrosyl-[protein] + ATP = O-phospho-L-tyrosyl-[protein] + ADP + H(+). Functionally, tyrosine-protein kinase that may play a role in the development of neural tissue and smooth muscle. May contribute to tyrosine phosphorylation of Dscam1, a cell surface receptor involved in targeting of growing axons during eye morphogenesis. In Drosophila melanogaster (Fruit fly), this protein is Tyrosine-protein kinase Src64B (Src64B).